Consider the following 105-residue polypeptide: Small ribosomal subunit protein uS10 (105 aa).

The protein belongs to the universal ribosomal protein uS10 family. In terms of assembly, part of the 30S ribosomal subunit.

Involved in the binding of tRNA to the ribosomes. The sequence is that of Small ribosomal subunit protein uS10 from Rickettsia peacockii (strain Rustic).